A 512-amino-acid chain; its full sequence is N-acetyltryptophan 6-hydroxylase ivoC (512 aa).

A helical membrane pass occupies residues 6-26; the sequence is LVFSFPAWALLLVLTLLYTLY. N118 is a glycosylation site (N-linked (GlcNAc...) asparagine). C453 provides a ligand contact to heme.

Belongs to the cytochrome P450 family. It depends on heme as a cofactor.

It is found in the membrane. It functions in the pathway pigment biosynthesis. In terms of biological role, N-acetyltryptophan 6-hydroxylase; part of the pathway that mediates the biosynthesis of the gray-brown conidiophore pigment. The first step of the pathway is performed by the nonribosomal peptide synthetase ivoA that catalyzes ATP-dependent unidirectional stereoinversion of L-tryptophan to D-tryptophan with complete conversion. While the stereoinversion is catalyzed by the epimerization (E) domain of ivoA, the terminal condensation (C) domain stereoselectively hydrolyzes D-tryptophanyl-S-phosphopantetheine thioester and thus represents a non-canonical C domain function. D-tryptophan is acetylated, probably by an endogenous acetyltransferase. N-acetyltryptophan is further 6-hydroxylated into N-acetyl-6-hydroxytryptophan (AHT) by the cytochrome P450 monooxygenase ivoC. N-acetyl-6-hydroxytryptophan is substrate of the N-acetyl-6-hydroxytryptophan oxidase ivoB to produce the gray-brown conidiophore pigment. The sequence is that of N-acetyltryptophan 6-hydroxylase ivoC from Emericella nidulans (strain FGSC A4 / ATCC 38163 / CBS 112.46 / NRRL 194 / M139) (Aspergillus nidulans).